We begin with the raw amino-acid sequence, 284 residues long: Cysteine-rich repeat secretory protein 8 (284 aa).

The N-terminal stretch at 1 to 27 (MATFIRFTAPLFCFFFLFSLFSHQTMS) is a signal peptide. 2 consecutive Gnk2-homologous domains span residues 32–136 (MATF…NVSF) and 151–259 (SLAT…TTGL).

The protein belongs to the cysteine-rich repeat secretory protein family.

Its subcellular location is the secreted. This Arabidopsis thaliana (Mouse-ear cress) protein is Cysteine-rich repeat secretory protein 8 (CRRSP8).